The sequence spans 154 residues: Fluoride-specific ion channel FluC 1 (154 aa).

4 helical membrane passes run 28 to 48, 59 to 79, 91 to 111, and 124 to 144; these read VVAV…AASL, WTTF…MVVI, PFFG…AVDS, and LAYL…AAWA. Glycine 99 and threonine 102 together coordinate Na(+).

Belongs to the fluoride channel Fluc/FEX (TC 1.A.43) family.

The protein resides in the cell membrane. It carries out the reaction fluoride(in) = fluoride(out). Na(+) is not transported, but it plays an essential structural role and its presence is essential for fluoride channel function. Fluoride-specific ion channel. Important for reducing fluoride concentration in the cell, thus reducing its toxicity. The protein is Fluoride-specific ion channel FluC 1 of Streptomyces coelicolor (strain ATCC BAA-471 / A3(2) / M145).